Reading from the N-terminus, the 274-residue chain is Kit ligand (274 aa).

Residues 1-25 (MKKTQTWIITCIYLQLLLFNPLVHS) form the signal peptide. The residue at position 26 (Gln-26) is a Pyrrolidone carboxylic acid. Residues 26 to 215 (QGICRNRVTD…SNSIEDSSLQ (190 aa)) lie on the Extracellular side of the membrane. 2 disulfides stabilise this stretch: Cys-29–Cys-114 and Cys-68–Cys-164. N-linked (GlcNAc...) asparagine glycans are attached at residues Asn-90, Asn-97, Asn-145, and Asn-196. Residues 216–238 (WAAVALPAFFSLVIGFAFGALYW) traverse the membrane as a helical segment. Residues 239–274 (KKKQPNLTRTVENRQINEEDNEISMLQEKEREFQEV) lie on the Cytoplasmic side of the membrane.

Belongs to the SCF family. Homodimer, non-covalently linked. Post-translationally, a soluble form is produced by proteolytic processing of the extracellular domain.

It localises to the cytoplasm. Its subcellular location is the cytoskeleton. The protein localises to the cell membrane. The protein resides in the cell projection. It is found in the lamellipodium. It localises to the filopodium. Its subcellular location is the secreted. In terms of biological role, stimulates the proliferation of mast cells. Able to augment the proliferation of both myeloid and lymphoid hematopoietic progenitors in bone marrow culture. Also mediates cell-cell adhesion. Acts synergistically with other cytokines, probably interleukins. This chain is Kit ligand (KITLG), found in Capra hircus (Goat).